Here is a 293-residue protein sequence, read N- to C-terminus: Coatomer subunit epsilon-2 (293 aa).

Belongs to the COPE family. As to quaternary structure, oligomeric complex that consists of at least the alpha, beta, beta', gamma, delta, epsilon and zeta subunits.

It is found in the cytoplasm. It localises to the golgi apparatus membrane. Its subcellular location is the cytoplasmic vesicle. The protein localises to the COPI-coated vesicle membrane. In terms of biological role, the coatomer is a cytosolic protein complex that binds to dilysine motifs and reversibly associates with Golgi non-clathrin-coated vesicles, which further mediate biosynthetic protein transport from the ER, via the Golgi up to the trans Golgi network. The coatomer complex is required for budding from Golgi membranes, and is essential for the retrograde Golgi-to-ER transport of dilysine-tagged proteins. The protein is Coatomer subunit epsilon-2 of Arabidopsis thaliana (Mouse-ear cress).